Reading from the N-terminus, the 101-residue chain is Small ribosomal subunit protein uS14 (101 aa).

A compositionally biased stretch (basic and acidic residues) spans 1-10; sequence MAKKSSIEKN. The tract at residues 1-25 is disordered; sequence MAKKSSIEKNNRRKKMAKNAAPKRE.

This sequence belongs to the universal ribosomal protein uS14 family. Part of the 30S ribosomal subunit. Contacts proteins S3 and S10.

In terms of biological role, binds 16S rRNA, required for the assembly of 30S particles and may also be responsible for determining the conformation of the 16S rRNA at the A site. This is Small ribosomal subunit protein uS14 from Rhodopseudomonas palustris (strain BisA53).